The sequence spans 818 residues: Protein TOC75-3, chloroplastic (818 aa).

The transit peptide at 1–79 directs the protein to the chloroplast; that stretch reads MAAFSVNGQL…LKNLAKPLAV (79 aa). The segment covering 15 to 41 has biased composition (low complexity); the sequence is TSSTASTSLSSRRKFLSPSSSRLPRIS. The segment at 15-67 is disordered; it reads TSSTASTSLSSRRKFLSPSSSRLPRISTQSPRVPSIKCSKSLPNRDTETSSKD. Residues 57–67 show a composition bias toward basic and acidic residues; that stretch reads PNRDTETSSKD. A chloroplast; outer membrane-targeting transit peptide spans 80 to 140; sequence ASVSSAASFF…KLFSPSPAVA (61 aa). POTRA domains are found at residues 141–246, 247–364, and 365–448; these read DEEQ…FAES, TWQS…VVEG, and DITQ…LKEL. The Chloroplast intermembrane portion of the chain corresponds to 141 to 473; sequence DEEQSPDWDS…GRGGAPTLAS (333 aa). Residues 474–482 form a beta stranded membrane-spanning segment; that stretch reads FQPGGSVTF. At 483–509 the chain is on the cytoplasmic side; it reads EHRNLQGLNRSLMGSVTTSNFLNPQDD. A beta stranded membrane pass occupies residues 510-518; it reads LSFKLEYVH. The Chloroplast intermembrane segment spans residues 519–562; that stretch reads PYLDGVYNPRNRTFKTSCFNSRKLSPVFTGGPGVEEVPPIWVDR. Residues 563-570 form a beta stranded membrane-spanning segment; it reads AGVKANIT. The Cytoplasmic segment spans residues 571-578; sequence ENFTRQSK. Residues 579–586 traverse the membrane as a beta stranded segment; sequence FTYGLVME. Residues 587–693 lie on the Chloroplast intermembrane side of the membrane; sequence EITTRDESSH…VEQGAGKSPP (107 aa). The beta stranded transmembrane segment at 694–702 threads the bilayer; it reads PVLVLHGHY. The Cytoplasmic segment spans residues 703–714; that stretch reads GGCVGDLPSYDA. The beta stranded transmembrane segment at 715–723 threads the bilayer; that stretch reads FVLGGPYSV. Residues 724–785 lie on the Chloroplast intermembrane side of the membrane; sequence RGYNMGELGA…VYRRTGQGSS (62 aa). Residues 786–792 traverse the membrane as a beta stranded segment; the sequence is YGAGVKL. At 793 to 806 the chain is on the cytoplasmic side; it reads GLVRAEYAVDHNNG. The chain crosses the membrane as a beta stranded span at residues 807–814; sequence TGALFFRF. At 815-818 the chain is on the chloroplast intermembrane side; the sequence is GERY.

It belongs to the TOC75 family. As to quaternary structure, part of the TOC core complex that includes a protein for the specific recognition of transit peptides surrounded by a ring composed of four proteins forming translocation channels, and four to five GTP-binding proteins providing energy. This core complex can interact with components of the TIC complex to form a larger import complex. Chloroplastic protein precursors such as prSS (precursor of the RuBisCO small subunit) also interact with these complexes. The TOC complex contains a specific subset of polar lipids such as digalactosyldiacylglyceride (DGDG), phosphatidylcholine (PC) and phosphatidylglycerol (PG). TOC75-3 interacts with TOC34/OEP34, TOC159/TOC86, TOC132 and TOC120. Interacts with SP1. Interacts with TIC236. As to expression, mostly expressed in young and actively dividing photosynthetic tissues and, to a lower extent, in old leaves and roots. Particularly low levels in leaves after etiolation.

The protein localises to the plastid. The protein resides in the chloroplast outer membrane. Essential protein. Mediates the insertion of proteins targeted to the outer membrane of chloroplasts. Required for the import of protein precursors into chloroplasts. Forms the voltage-dependent preprotein translocation channels (hydrophilic beta barrel) of the TOC complex in the chloroplastic outer membrane. This is Protein TOC75-3, chloroplastic from Arabidopsis thaliana (Mouse-ear cress).